The chain runs to 90 residues: Probable Fe(2+)-trafficking protein (90 aa).

The protein belongs to the Fe(2+)-trafficking protein family.

Functionally, could be a mediator in iron transactions between iron acquisition and iron-requiring processes, such as synthesis and/or repair of Fe-S clusters in biosynthetic enzymes. The protein is Probable Fe(2+)-trafficking protein of Aeromonas salmonicida (strain A449).